The chain runs to 200 residues: Cytochrome c biogenesis ATP-binding export protein CcmA (200 aa).

Residues 1–200 (MRLSGNGLRC…ARELRIGGAA (200 aa)) enclose the ABC transporter domain. 35-42 (GPNGAGKT) is an ATP binding site.

The protein belongs to the ABC transporter superfamily. CcmA exporter (TC 3.A.1.107) family. The complex is composed of two ATP-binding proteins (CcmA) and two transmembrane proteins (CcmB).

Its subcellular location is the cell inner membrane. It carries out the reaction heme b(in) + ATP + H2O = heme b(out) + ADP + phosphate + H(+). Functionally, part of the ABC transporter complex CcmAB involved in the biogenesis of c-type cytochromes; once thought to export heme, this seems not to be the case, but its exact role is uncertain. Responsible for energy coupling to the transport system. In Nitrobacter winogradskyi (strain ATCC 25391 / DSM 10237 / CIP 104748 / NCIMB 11846 / Nb-255), this protein is Cytochrome c biogenesis ATP-binding export protein CcmA.